The primary structure comprises 167 residues: uncharacterized protein (167 aa).

In terms of domain architecture, N-acetyltransferase spans 9-167 (PVMRRLTLQD…DCEVRMLREL (159 aa)).

Belongs to the acetyltransferase family.

This is an uncharacterized protein from Escherichia coli (strain K12).